The chain runs to 289 residues: tRNA dimethylallyltransferase (289 aa).

Residue 9 to 16 (GTTASGKT) coordinates ATP. 11-16 (TASGKT) provides a ligand contact to substrate. An interaction with substrate tRNA region spans residues 34 to 37 (DSLC).

Belongs to the IPP transferase family. As to quaternary structure, monomer. Requires Mg(2+) as cofactor.

The enzyme catalyses adenosine(37) in tRNA + dimethylallyl diphosphate = N(6)-dimethylallyladenosine(37) in tRNA + diphosphate. Functionally, catalyzes the transfer of a dimethylallyl group onto the adenine at position 37 in tRNAs that read codons beginning with uridine, leading to the formation of N6-(dimethylallyl)adenosine (i(6)A). The sequence is that of tRNA dimethylallyltransferase from Campylobacter jejuni subsp. jejuni serotype O:23/36 (strain 81-176).